We begin with the raw amino-acid sequence, 153 residues long: MENYCKIVAQNRKAKFNYFIQDKMEAGIVLQGSELKSIRSGKVSIEDSYAAESSNEIFLYNSYIGEYKQANRFNHVPRRVRKLLLHRKEIQKIIGKLSVQGCTLVALSIYFNSKNKVKVELGLAKGKKQYDKRYAIKEQEWKKQQARIMRNKF.

Belongs to the SmpB family.

The protein resides in the cytoplasm. In terms of biological role, required for rescue of stalled ribosomes mediated by trans-translation. Binds to transfer-messenger RNA (tmRNA), required for stable association of tmRNA with ribosomes. tmRNA and SmpB together mimic tRNA shape, replacing the anticodon stem-loop with SmpB. tmRNA is encoded by the ssrA gene; the 2 termini fold to resemble tRNA(Ala) and it encodes a 'tag peptide', a short internal open reading frame. During trans-translation Ala-aminoacylated tmRNA acts like a tRNA, entering the A-site of stalled ribosomes, displacing the stalled mRNA. The ribosome then switches to translate the ORF on the tmRNA; the nascent peptide is terminated with the 'tag peptide' encoded by the tmRNA and targeted for degradation. The ribosome is freed to recommence translation, which seems to be the essential function of trans-translation. This chain is SsrA-binding protein, found in Orientia tsutsugamushi (strain Boryong) (Rickettsia tsutsugamushi).